The sequence spans 1017 residues: Voltage-gated delayed rectifier potassium channel KCNH4 (1017 aa).

The Cytoplasmic segment spans residues methionine 1–glycine 232. Residues phenylalanine 14–histidine 90 form the PAS domain. Residues histidine 93–glycine 145 enclose the PAC domain. The tract at residues proline 139–arginine 170 is disordered. Residues leucine 233–glycine 253 traverse the membrane as a helical segment. The Extracellular portion of the chain corresponds to aspartate 254 to arginine 262. A helical transmembrane segment spans residues histidine 263–phenylalanine 283. Topologically, residues arginine 284–tyrosine 305 are cytoplasmic. The helical transmembrane segment at leucine 306 to phenylalanine 326 threads the bilayer. Residues asparagine 327–valine 334 lie on the Extracellular side of the membrane. The helical; Voltage-sensor transmembrane segment at histidine 335–tyrosine 355 threads the bilayer. Over serine 356 to threonine 364 the chain is Cytoplasmic. The helical transmembrane segment at leucine 365–glycine 385 threads the bilayer. Residues arginine 386–tyrosine 427 lie on the Extracellular side of the membrane. A glycan (N-linked (GlcNAc...) asparagine) is linked at asparagine 415. The segment at residues isoleucine 428 to alanine 448 is an intramembrane region (pore-forming). The Selectivity filter signature appears at serine 440–asparagine 445. The Extracellular segment spans residues asparagine 449–lysine 454. A helical transmembrane segment spans residues isoleucine 455–valine 475. Residues threonine 476–histidine 1017 lie on the Cytoplasmic side of the membrane. Residues leucine 557–glycine 621 form a cNMP-binding domain region. 2 disordered regions span residues glycine 690 to serine 749 and leucine 771 to threonine 870. The segment covering proline 703–glutamate 726 has biased composition (polar residues). Low complexity-rich tracts occupy residues leucine 771 to alanine 786 and proline 806 to proline 820. Residues alanine 873–leucine 907 are a coiled coil. Residues serine 972–histidine 1017 form a disordered region. Positions proline 980 to glutamate 996 are enriched in pro residues. Positions serine 1008–histidine 1017 are enriched in polar residues.

This sequence belongs to the potassium channel family. H (Eag) (TC 1.A.1.20) subfamily. Kv12.3/KCNH4 sub-subfamily. As to quaternary structure, the potassium channel is probably composed of a homo- or heterotetrameric complex of pore-forming alpha subunits that can associate with modulating beta subunits. As to expression, highly expressed in adult testis, and in adult and embryonic brain. In adult brain found in piriform cortex, olfactory tubercle, cerebral cortex, hippocampus pyramidial cells and dentate gyrus and basal ganglia of caudate/putamen and accumbens nucleus. Detected at intermediate levels in lung, spinal cord, and pituitary.

It localises to the membrane. It catalyses the reaction K(+)(in) = K(+)(out). Pore-forming (alpha) subunit of a voltage-gated delayed rectifier. Activates at more negative voltages, exhibits fast prepulse-independent activation kinetics and deactivates much more slowly, but shows no inactivation. The protein is Voltage-gated delayed rectifier potassium channel KCNH4 of Rattus norvegicus (Rat).